The sequence spans 506 residues: Gamma-aminobutyric acid receptor subunit epsilon (506 aa).

The N-terminal stretch at 1-17 (MLPKVLLMLLNMFLALQ) is a signal peptide. Over 18–277 (WRVGPHIKLE…MTFFFNVSRR (260 aa)) the chain is Extracellular. Residues 32 to 65 (AQDKVVFGPQPQPSGKKLPARETELTADHTTERP) form a disordered region. Over residues 50–65 (PARETELTADHTTERP) the composition is skewed to basic and acidic residues. Residue Asn-135 is glycosylated (N-linked (GlcNAc...) asparagine). Cysteines 196 and 210 form a disulfide. Asn-253 is a glycosylation site (N-linked (GlcNAc...) asparagine). Residues 278 to 298 (FGFIVFQNYIPSSVTTMLSWV) form a helical membrane-spanning segment. The Cytoplasmic segment spans residues 299 to 308 (SFWIKIEAAA). The helical transmembrane segment at 309–328 (ARASVGVSSVLTMATLGTFS) threads the bilayer. The Extracellular portion of the chain corresponds to 329–344 (RKNFPRVSYLTALDFY). Residues 345–365 (IAICFVLCFCTLLEFTVLNFL) form a helical membrane-spanning segment. Topologically, residues 366–485 (TYNNIERQAS…HVYRLDNYSR (120 aa)) are cytoplasmic. Residues 486–506 (VLFPITFFFFNVVYWVICLNL) form a helical membrane-spanning segment.

This sequence belongs to the ligand-gated ion channel (TC 1.A.9) family. Gamma-aminobutyric acid receptor (TC 1.A.9.5) subfamily. GABRE sub-subfamily. In terms of assembly, heteropentamer, formed by a combination of alpha (GABRA1-6), beta (GABRB1-3), gamma (GABRG1-3), delta (GABRD), epsilon (GABRE), rho (GABRR1-3), pi (GABRP) and theta (GABRQ) chains, each subunit exhibiting distinct physiological and pharmacological properties. In terms of tissue distribution, expressed in brain and heart. Strongly expressed in locus ceruleus from the first postnatal day. Weakly expressed in other brainstem nuclei and in the hypothalamus. Found in the cerebral cortex of pups.

It is found in the cell membrane. Its subcellular location is the postsynaptic cell membrane. It catalyses the reaction chloride(in) = chloride(out). Its function is as follows. Epsilon subunit of the heteropentameric ligand-gated chloride channel gated by gamma-aminobutyric acid (GABA), a major inhibitory neurotransmitter in the brain. GABA-gated chloride channels, also named GABA(A) receptors (GABAAR), consist of five subunits arranged around a central pore and contain GABA active binding site(s) located at the alpha and beta subunit interfaces. When activated by GABA, GABAARs selectively allow the flow of chloride anions across the cell membrane down their electrochemical gradient. GABARs containing epsilon subunit may also permit spontaneous chloride channel activity while preserving the structural information required for GABA-gated openings. GABARs containing epsilon subunit may regulate cardiac function. This is Gamma-aminobutyric acid receptor subunit epsilon from Rattus norvegicus (Rat).